A 198-amino-acid chain; its full sequence is Carnitine operon protein CaiE (198 aa).

The interval Val179–Gln198 is disordered. The segment covering Glu180 to Gln198 has biased composition (basic and acidic residues).

It belongs to the transferase hexapeptide repeat family.

The protein operates within amine and polyamine metabolism; carnitine metabolism. Its function is as follows. Overproduction of CaiE stimulates the activity of CaiB and CaiD. This is Carnitine operon protein CaiE from Salmonella enteritidis PT4 (strain P125109).